Reading from the N-terminus, the 418-residue chain is 4-hydroxy-3-methylbut-2-en-1-yl diphosphate synthase (flavodoxin) (418 aa).

Residues C305, C308, C351, and E358 each coordinate [4Fe-4S] cluster.

The protein belongs to the IspG family. The cofactor is [4Fe-4S] cluster.

It catalyses the reaction (2E)-4-hydroxy-3-methylbut-2-enyl diphosphate + oxidized [flavodoxin] + H2O + 2 H(+) = 2-C-methyl-D-erythritol 2,4-cyclic diphosphate + reduced [flavodoxin]. The protein operates within isoprenoid biosynthesis; isopentenyl diphosphate biosynthesis via DXP pathway; isopentenyl diphosphate from 1-deoxy-D-xylulose 5-phosphate: step 5/6. In terms of biological role, converts 2C-methyl-D-erythritol 2,4-cyclodiphosphate (ME-2,4cPP) into 1-hydroxy-2-methyl-2-(E)-butenyl 4-diphosphate. This chain is 4-hydroxy-3-methylbut-2-en-1-yl diphosphate synthase (flavodoxin), found in Bartonella bacilliformis (strain ATCC 35685 / KC583 / Herrer 020/F12,63).